The chain runs to 474 residues: L-arabinose isomerase (474 aa).

Mn(2+)-binding residues include Glu306, Glu331, His348, and His447.

Belongs to the arabinose isomerase family. Mn(2+) is required as a cofactor.

The enzyme catalyses beta-L-arabinopyranose = L-ribulose. Its pathway is carbohydrate degradation; L-arabinose degradation via L-ribulose; D-xylulose 5-phosphate from L-arabinose (bacterial route): step 1/3. Its function is as follows. Catalyzes the conversion of L-arabinose to L-ribulose. In Oceanobacillus iheyensis (strain DSM 14371 / CIP 107618 / JCM 11309 / KCTC 3954 / HTE831), this protein is L-arabinose isomerase.